The primary structure comprises 379 residues: Chaperone protein DnaJ (379 aa).

Residues 5 to 70 enclose the J domain; that stretch reads DYYEILGLDK…QKKAQYDQFG (66 aa). Residues 135–217 form a CR-type zinc finger; sequence GVEKEISVTR…CRGKGIVRKH (83 aa). Positions 148, 151, 165, 168, 191, 194, 205, and 208 each coordinate Zn(2+). CXXCXGXG motif repeat units lie at residues 148 to 155, 165 to 172, 191 to 198, and 205 to 212; these read CETCNGTG, CDKCNGTG, CDKCGGRG, and CEECRGKG.

The protein belongs to the DnaJ family. In terms of assembly, homodimer. It depends on Zn(2+) as a cofactor.

The protein localises to the cytoplasm. Functionally, participates actively in the response to hyperosmotic and heat shock by preventing the aggregation of stress-denatured proteins and by disaggregating proteins, also in an autonomous, DnaK-independent fashion. Unfolded proteins bind initially to DnaJ; upon interaction with the DnaJ-bound protein, DnaK hydrolyzes its bound ATP, resulting in the formation of a stable complex. GrpE releases ADP from DnaK; ATP binding to DnaK triggers the release of the substrate protein, thus completing the reaction cycle. Several rounds of ATP-dependent interactions between DnaJ, DnaK and GrpE are required for fully efficient folding. Also involved, together with DnaK and GrpE, in the DNA replication of plasmids through activation of initiation proteins. The protein is Chaperone protein DnaJ of Clostridium kluyveri (strain ATCC 8527 / DSM 555 / NBRC 12016 / NCIMB 10680 / K1).